Reading from the N-terminus, the 320-residue chain is 4-diphosphocytidyl-2-C-methyl-D-erythritol kinase (320 aa).

Lys-20 is a catalytic residue. 112-122 serves as a coordination point for ATP; that stretch reads PVAGGMGGGSA. The active site involves Asp-154.

Belongs to the GHMP kinase family. IspE subfamily.

It catalyses the reaction 4-CDP-2-C-methyl-D-erythritol + ATP = 4-CDP-2-C-methyl-D-erythritol 2-phosphate + ADP + H(+). The protein operates within isoprenoid biosynthesis; isopentenyl diphosphate biosynthesis via DXP pathway; isopentenyl diphosphate from 1-deoxy-D-xylulose 5-phosphate: step 3/6. In terms of biological role, catalyzes the phosphorylation of the position 2 hydroxy group of 4-diphosphocytidyl-2C-methyl-D-erythritol. The chain is 4-diphosphocytidyl-2-C-methyl-D-erythritol kinase from Arthrobacter sp. (strain FB24).